Reading from the N-terminus, the 262-residue chain is Putative dimethyl sulfoxide reductase iron-sulfur subunit B (262 aa).

4Fe-4S ferredoxin-type domains are found at residues 4 to 34 (YGLV…MGQF), 62 to 93 (LEMT…TRDD), and 94 to 123 (GIVE…FNWD). Residues Cys13, Cys16, Cys19, Cys23, Cys71, Cys74, Cys79, Cys83, Cys103, Cys106, Cys109, Cys113, Cys147, Cys150, Cys162, and Cys166 each coordinate [4Fe-4S] cluster. Positions 209–262 (NGEMSPGRPWKSKKLESELDDDEAAKAARRRSGSVENGYDVTPHVPAETAGGDD) are disordered.

In terms of assembly, probable multiprotein complex that likely consists of DmsA, DmsB and DmsC. The cofactor is [4Fe-4S] cluster.

The protein localises to the cell membrane. Functionally, dimethyl sulfoxide (DMSO) reductase catalyzes the reduction of dimethyl sulfoxide (DMSO) to dimethyl sulfide (DMS) during anaerobic respiration; it can also use trimethylamine N-oxide (TMAO) as terminal electron acceptor. Subunit B is proposed to be involved in electron transfer. The polypeptide is Putative dimethyl sulfoxide reductase iron-sulfur subunit B (dmsB) (Halobacterium salinarum (strain ATCC 700922 / JCM 11081 / NRC-1) (Halobacterium halobium)).